Reading from the N-terminus, the 123-residue chain is Small ribosomal subunit protein uS12 (123 aa).

Asp89 bears the 3-methylthioaspartic acid mark. The segment at 104–123 (TQGVKDRRQRRSKYGAKRPK) is disordered. Residues 110-123 (RRQRRSKYGAKRPK) show a composition bias toward basic residues.

Belongs to the universal ribosomal protein uS12 family. As to quaternary structure, part of the 30S ribosomal subunit. Contacts proteins S8 and S17. May interact with IF1 in the 30S initiation complex.

In terms of biological role, with S4 and S5 plays an important role in translational accuracy. Functionally, interacts with and stabilizes bases of the 16S rRNA that are involved in tRNA selection in the A site and with the mRNA backbone. Located at the interface of the 30S and 50S subunits, it traverses the body of the 30S subunit contacting proteins on the other side and probably holding the rRNA structure together. The combined cluster of proteins S8, S12 and S17 appears to hold together the shoulder and platform of the 30S subunit. This Parvibaculum lavamentivorans (strain DS-1 / DSM 13023 / NCIMB 13966) protein is Small ribosomal subunit protein uS12.